Reading from the N-terminus, the 590-residue chain is Putative ABC transporter ATP-binding protein MM_3016 (590 aa).

2 consecutive ABC transporter domains span residues Val-11–Ile-251 and Val-317–Ile-550. Residues Gly-45–Ser-52 and Gly-350–Thr-357 each bind ATP.

Belongs to the ABC transporter superfamily.

The protein resides in the cell membrane. Its function is as follows. Probably part of an ABC transporter complex. Responsible for energy coupling to the transport system. The polypeptide is Putative ABC transporter ATP-binding protein MM_3016 (Methanosarcina mazei (strain ATCC BAA-159 / DSM 3647 / Goe1 / Go1 / JCM 11833 / OCM 88) (Methanosarcina frisia)).